Here is an 85-residue protein sequence, read N- to C-terminus: COMM domain-containing protein 6 (85 aa).

M1 bears the N-acetylmethionine mark. Residues 18 to 85 (QLVDFQWKLG…KEIAAVIETV (68 aa)) enclose the COMM domain.

It belongs to the COMM domain-containing protein 6 family. In terms of assembly, component of the commander complex consisting of the CCC subcomplex and the retriever subcomplex. Component of the CCC (COMMD/CCDC22/CCDC93) subcomplex consisting of COMMD1, COMMD2, COMMD3, COMMD4, COMMD5, COMMD6, COMMD7, COMMD8, COMMD9, COMMD10, CCDC22 and CCDC93; within the complex forms a heterodimer with COMMD1. May form a homodimer with isoform 1. Interacts with RELA, RELB, NFKB1/p105. Does not interact with NFKBIB. Interacts with CCDC22, CCDC93, SCNN1B, CUL4A. As to expression, ubiquitous. Expressed in brain, heart, skeletal muscle, lung, pancreas, liver, kidney, small intestine and placenta.

The protein localises to the nucleus. It is found in the cytoplasm. Scaffold protein in the commander complex that is essential for endosomal recycling of transmembrane cargos; the commander complex is composed of the CCC subcomplex and the retriever subcomplex. May modulate activity of cullin-RING E3 ubiquitin ligase (CRL) complexes. Down-regulates activation of NF-kappa-B. Inhibits TNF-induced NFKB1 activation. The chain is COMM domain-containing protein 6 (COMMD6) from Homo sapiens (Human).